Reading from the N-terminus, the 524-residue chain is Na(+)/H(+) antiporter NhaB (524 aa).

Helical transmembrane passes span 13–33, 98–118, 140–160, 239–259, 304–324, 325–345, 358–378, 448–468, and 479–499; these read FLGN…IINP, LLLV…LFVF, AFLS…SVSV, FFIR…LVCL, AIIG…VGLV, GLSV…HSLG, LTVF…TPII, ATPN…APLI, and ALPY…FLLV.

Belongs to the NhaB Na(+)/H(+) (TC 2.A.34) antiporter family.

Its subcellular location is the cell inner membrane. It catalyses the reaction 2 Na(+)(in) + 3 H(+)(out) = 2 Na(+)(out) + 3 H(+)(in). Its function is as follows. Na(+)/H(+) antiporter that extrudes sodium in exchange for external protons. In Yersinia pestis (strain Pestoides F), this protein is Na(+)/H(+) antiporter NhaB.